The chain runs to 318 residues: MSPVLSESQLRDFKHTLESSKIPFRSEVRLGILSSFKIGGVCPVIVEPEISSQVSEILHIFSKFDIPWKILGGGSNLLISDHPDNFVTLRLSGKFKEFVSLGDGKFKIGAATNTTPTFRQISQLGYTGAEFLSTIPGWTGGAVIQNAGCYGGELFDLIESVEFLRNGEMFVRKPSEIKYGYRFTEFLNQKDSIILGIEILLKEGNLEEIESSLKDKRDRRNSSQPENKKSAGSVFKNPKVFREDGKEIKAWELLDQAGLRGQIKGGAQISPEHCNFIVNLGTATASDVHYLIDLVVDRVYQTSGILLNREIEFFGDIP.

The 167-residue stretch at 38-204 (IGGVCPVIVE…LGIEILLKEG (167 aa)) folds into the FAD-binding PCMH-type domain. The active site involves R182. Positions 212-229 (SLKDKRDRRNSSQPENKK) are enriched in basic and acidic residues. The interval 212 to 232 (SLKDKRDRRNSSQPENKKSAG) is disordered. S233 serves as the catalytic Proton donor. E310 is an active-site residue.

The protein belongs to the MurB family. The cofactor is FAD.

Its subcellular location is the cytoplasm. The catalysed reaction is UDP-N-acetyl-alpha-D-muramate + NADP(+) = UDP-N-acetyl-3-O-(1-carboxyvinyl)-alpha-D-glucosamine + NADPH + H(+). It participates in cell wall biogenesis; peptidoglycan biosynthesis. Cell wall formation. The polypeptide is UDP-N-acetylenolpyruvoylglucosamine reductase (Leptospira interrogans serogroup Icterohaemorrhagiae serovar Lai (strain 56601)).